Here is an 859-residue protein sequence, read N- to C-terminus: Protein O-mannosyl-transferase Tmtc1 (859 aa).

The Cytoplasmic portion of the chain corresponds to 1 to 22; the sequence is MHTPKCRRPSMSATLSHKDLAG. The helical transmembrane segment at 23 to 43 threads the bilayer; the sequence is LAGCSALAFVLYLNTLNAGFV. Residues 44 to 103 lie on the Extracellular side of the membrane; it reads YDDRRAILANGDVTGARPLANLLRNDFWGTPLVDSGSHGSWRPLCVLSFRLNYLAGGMTP. A helical transmembrane segment spans residues 104–124; sequence LGYHLVNVMLHCVATWLVFLV. Residues 125 to 134 are Cytoplasmic-facing; sequence ARTLLPSRMG. A run of 2 helical transmembrane segments spans residues 135 to 154 and 155 to 174; these read VLAA…AVAG and LVGR…YLSY. Over 175-189 the chain is Cytoplasmic; sequence RRHMLNREWGSLILT. The chain crosses the membrane as a helical span at residues 190–210; that stretch reads IMLALAALLCKETAITALLLC. Over 211 to 245 the chain is Extracellular; that stretch reads GLCDVLSPVGRENSDKVCDGSISGLASFNFQRRFR. The chain crosses the membrane as a helical span at residues 246–266; that stretch reads SLSILGFTLLCGLYCRLSLLP. The Cytoplasmic segment spans residues 267 to 288; the sequence is RPSTAFSAADNPTAHESCFWTR. The helical transmembrane segment at 289 to 309 threads the bilayer; the sequence is TLTFLYLPVANFGILLWPQEL. At 310–328 the chain is on the extracellular side; the sequence is SFDWGMEAVSRIRTLWDAR. The chain crosses the membrane as a helical span at residues 329–349; the sequence is NILTAGFYGSLVAILWKGSGL. Topologically, residues 350 to 422 are cytoplasmic; sequence RSAASPMDFA…SWTAAPILGT (73 aa). A helical transmembrane segment spans residues 423–443; that stretch reads AFLVLPFLPASNLLFYVGFVM. The Extracellular portion of the chain corresponds to 444–446; it reads AER. A helical membrane pass occupies residues 447-467; the sequence is VLYLPSVGYCLLFGLGFGHLW. The Cytoplasmic segment spans residues 468 to 473; sequence QRVNSS. The helical transmembrane segment at 474–493 threads the bilayer; that stretch reads WRSRLMLLCGLALLLGVHGV. Residues 494 to 859 are Extracellular-facing; it reads RTFRRNLDWR…RMNVHKHENE (366 aa). TPR repeat units lie at residues 518–551, 552–585, 586–620, 632–665, 671–704, 705–739, 740–773, 774–807, and 808–841; these read PKAL…RPTM, ADAH…RPQL, AVAY…EGSG, YTCY…LPLL, AVLH…QPEQ, GAAY…APLE, PSSH…APQD, YTLQ…QPMA, and AHAH…QPGH. Residue Asn567 is glycosylated (N-linked (GlcNAc...) asparagine). Asn718 carries an N-linked (GlcNAc...) asparagine glycan.

The protein belongs to the TMTC family.

Its subcellular location is the membrane. The protein localises to the endoplasmic reticulum. The catalysed reaction is a di-trans,poly-cis-dolichyl beta-D-mannosyl phosphate + L-seryl-[protein] = 3-O-(alpha-D-mannosyl)-L-seryl-[protein] + a di-trans,poly-cis-dolichyl phosphate + H(+). It catalyses the reaction a di-trans,poly-cis-dolichyl beta-D-mannosyl phosphate + L-threonyl-[protein] = 3-O-(alpha-D-mannosyl)-L-threonyl-[protein] + a di-trans,poly-cis-dolichyl phosphate + H(+). It participates in protein modification; protein glycosylation. In terms of biological role, transfers mannosyl residues to the hydroxyl group of serine or threonine residues. This is Protein O-mannosyl-transferase Tmtc1 from Drosophila melanogaster (Fruit fly).